Reading from the N-terminus, the 470-residue chain is Leucine-rich repeat extensin-like protein 6 (470 aa).

An N-terminal signal peptide occupies residues 1–28 (MREDTFFFQWWFLVSGLSFIFLLPQAFT). A glycan (N-linked (GlcNAc...) asparagine) is linked at Asn83. 10 LRR repeats span residues 98–122 (VLTV…LGLL), 123–146 (TDLA…LKCL), 147–170 (HLLH…IFSL), 171–194 (PSLK…LFDL), 196–217 (LDAL…IGNS), 219–241 (VSVL…FYKM), 243–265 (KTLH…EIGL), 266–290 (LNQL…IGDM), 291–314 (KSLE…ICRL), and 316–337 (RLEN…CLRL). Residue Asn319 is glycosylated (N-linked (GlcNAc...) asparagine). The segment at 378–411 (SPPPPPPPPPPPPPPPPPPPPPPPPPPPPPYVYP) is disordered. The segment at 378 to 470 (SPPPPPPPPP…CNDLPTPVHY (93 aa)) is contains the Ser-Pro(4) repeats.

Hydroxylated on proline residues in the S-P-P-P-P repeat. Post-translationally, O-glycosylated on hydroxyprolines. In terms of tissue distribution, expressed in roots.

It localises to the secreted. Its subcellular location is the cell wall. In terms of biological role, modulates cell morphogenesis by regulating cell wall formation and assembly, and/or growth polarization. The protein is Leucine-rich repeat extensin-like protein 6 (LRX6) of Arabidopsis thaliana (Mouse-ear cress).